The primary structure comprises 317 residues: R-phycoerythrin gamma chain, chloroplastic (317 aa).

A chloroplast-targeting transit peptide spans 1–40 (MASPAFAVNGMFTPVKLSGSFTASMPVDSKPAASATGVRM). Phycourobilin is bound by residues Cys94 and Cys133. Residue Cys210 coordinates (2R,3E)-phycoerythrobilin. Cys297 is a binding site for phycourobilin.

Heteromer of 1 alpha, 1 beta and 2 gamma chains. In terms of processing, contains four covalently linked bilin chromophores.

The protein resides in the plastid. Its subcellular location is the chloroplast thylakoid membrane. Functionally, critical for the incorporation of phycoerythrin in the phycobilisome complex. The chain is R-phycoerythrin gamma chain, chloroplastic from Aglaothamnion neglectum (Red alga).